The chain runs to 962 residues: Protease 3 (962 aa).

The first 23 residues, 1–23, serve as a signal peptide directing secretion; it reads MPRSTWFKALLLLVALWAPLSQA. His-88 is a Zn(2+) binding site. The active-site Proton acceptor is the Glu-91. Zn(2+)-binding residues include His-92 and Glu-169.

It belongs to the peptidase M16 family. Monomer. Zn(2+) serves as cofactor.

The protein localises to the periplasm. It catalyses the reaction Preferential cleavage of 16-Tyr-|-Leu-17 and 25-Phe-|-Tyr-26 bonds of oxidized insulin B chain. Also acts on other substrates of Mw less than 7 kDa such as insulin and glucagon.. Endopeptidase that degrades small peptides of less than 7 kDa, such as glucagon and insulin. The protein is Protease 3 (ptrA) of Escherichia coli (strain K12).